The chain runs to 193 residues: Protein TEX261 (193 aa).

Helical transmembrane passes span 1–21, 39–59, 67–87, 94–114, and 122–142; these read MVGV…PPPA, SRII…LYVF, IGVG…FPFI, FILS…FFAE, and VLAY…VSLS.

The protein belongs to the SVP26 family.

It localises to the membrane. This Bos taurus (Bovine) protein is Protein TEX261 (TEX261).